The sequence spans 512 residues: ATP synthase subunit alpha (512 aa).

169-176 (GDRKTGKT) serves as a coordination point for ATP.

This sequence belongs to the ATPase alpha/beta chains family. In terms of assembly, F-type ATPases have 2 components, CF(1) - the catalytic core - and CF(0) - the membrane proton channel. CF(1) has five subunits: alpha(3), beta(3), gamma(1), delta(1), epsilon(1). CF(0) has three main subunits: a(1), b(2) and c(9-12). The alpha and beta chains form an alternating ring which encloses part of the gamma chain. CF(1) is attached to CF(0) by a central stalk formed by the gamma and epsilon chains, while a peripheral stalk is formed by the delta and b chains.

It is found in the cell membrane. The catalysed reaction is ATP + H2O + 4 H(+)(in) = ADP + phosphate + 5 H(+)(out). Functionally, produces ATP from ADP in the presence of a proton gradient across the membrane. The alpha chain is a regulatory subunit. This chain is ATP synthase subunit alpha, found in Limosilactobacillus fermentum (strain NBRC 3956 / LMG 18251) (Lactobacillus fermentum).